Here is a 361-residue protein sequence, read N- to C-terminus: Chorismate synthase (361 aa).

Residues arginine 48 and arginine 54 each contribute to the NADP(+) site. Residues 125-127, 238-239, glycine 278, 293-297, and arginine 319 contribute to the FMN site; these read RSS, NA, and KPTSS.

This sequence belongs to the chorismate synthase family. Homotetramer. FMNH2 is required as a cofactor.

The enzyme catalyses 5-O-(1-carboxyvinyl)-3-phosphoshikimate = chorismate + phosphate. The protein operates within metabolic intermediate biosynthesis; chorismate biosynthesis; chorismate from D-erythrose 4-phosphate and phosphoenolpyruvate: step 7/7. In terms of biological role, catalyzes the anti-1,4-elimination of the C-3 phosphate and the C-6 proR hydrogen from 5-enolpyruvylshikimate-3-phosphate (EPSP) to yield chorismate, which is the branch point compound that serves as the starting substrate for the three terminal pathways of aromatic amino acid biosynthesis. This reaction introduces a second double bond into the aromatic ring system. This Salmonella arizonae (strain ATCC BAA-731 / CDC346-86 / RSK2980) protein is Chorismate synthase.